Reading from the N-terminus, the 150-residue chain is Transthyretin (150 aa).

Positions 1–20 (MAFHSMLLVFLAGLVFLTEA) are cleaved as a signal peptide. Position 33 is a sulfocysteine (Cys-33). Positions 38, 77, and 140 each coordinate L-thyroxine.

This sequence belongs to the transthyretin family. Homotetramer. Dimer of dimers. In the homotetramer, subunits assemble around a central channel that can accommodate two ligand molecules. Interacts with RBP4. Post-translationally, sulfonation of the reactive cysteine Cys-33 enhances the stability of the native conformation of TTR, avoiding misassembly of the protein leading to amyloid formation. Strongly expressed in the brain, and to a lesser extent in the eye.

The protein localises to the secreted. Functionally, thyroid hormone-binding protein, with a much higher binding affinity for triiodothyronine (T3) than for thyroxine (T4). Probably transports triiodothyronine from the bloodstream to the brain. In Crocodylus porosus (Saltwater crocodile), this protein is Transthyretin (TTR).